The following is a 526-amino-acid chain: DDB1- and CUL4-associated factor 17 (526 aa).

2 helical membrane passes run 200–220 (ILMRVAAFQVFPLQLVGMLEI) and 237–257 (GVLAVSHSSKLVRLYSFEYIV).

The protein localises to the membrane. It localises to the nucleus. The protein resides in the nucleolus. The protein operates within protein modification; protein ubiquitination. Its function is as follows. May function as a substrate receptor for CUL4-DDB1 E3 ubiquitin-protein ligase complex. This Danio rerio (Zebrafish) protein is DDB1- and CUL4-associated factor 17 (dcaf17).